The chain runs to 458 residues: Bifunctional protein GlmU (458 aa).

Residues Met1–Arg229 form a pyrophosphorylase region. UDP-N-acetyl-alpha-D-glucosamine is bound by residues Leu8–Gly11, Lys22, Gln72, and Gly77–Thr78. Asp102 serves as a coordination point for Mg(2+). Residues Gly139, Glu154, Asn169, and Asn227 each contribute to the UDP-N-acetyl-alpha-D-glucosamine site. Asn227 contacts Mg(2+). The interval Val230–Asn250 is linker. Residues Gly251–Gln458 are N-acetyltransferase. UDP-N-acetyl-alpha-D-glucosamine contacts are provided by Arg332 and Lys350. His362 (proton acceptor) is an active-site residue. The UDP-N-acetyl-alpha-D-glucosamine site is built by Tyr365 and Asn376. Ala379, Ser404, Ala422, and Arg439 together coordinate acetyl-CoA.

This sequence in the N-terminal section; belongs to the N-acetylglucosamine-1-phosphate uridyltransferase family. It in the C-terminal section; belongs to the transferase hexapeptide repeat family. As to quaternary structure, homotrimer. It depends on Mg(2+) as a cofactor.

It localises to the cytoplasm. The enzyme catalyses alpha-D-glucosamine 1-phosphate + acetyl-CoA = N-acetyl-alpha-D-glucosamine 1-phosphate + CoA + H(+). It catalyses the reaction N-acetyl-alpha-D-glucosamine 1-phosphate + UTP + H(+) = UDP-N-acetyl-alpha-D-glucosamine + diphosphate. Its pathway is nucleotide-sugar biosynthesis; UDP-N-acetyl-alpha-D-glucosamine biosynthesis; N-acetyl-alpha-D-glucosamine 1-phosphate from alpha-D-glucosamine 6-phosphate (route II): step 2/2. The protein operates within nucleotide-sugar biosynthesis; UDP-N-acetyl-alpha-D-glucosamine biosynthesis; UDP-N-acetyl-alpha-D-glucosamine from N-acetyl-alpha-D-glucosamine 1-phosphate: step 1/1. It participates in bacterial outer membrane biogenesis; LPS lipid A biosynthesis. Functionally, catalyzes the last two sequential reactions in the de novo biosynthetic pathway for UDP-N-acetylglucosamine (UDP-GlcNAc). The C-terminal domain catalyzes the transfer of acetyl group from acetyl coenzyme A to glucosamine-1-phosphate (GlcN-1-P) to produce N-acetylglucosamine-1-phosphate (GlcNAc-1-P), which is converted into UDP-GlcNAc by the transfer of uridine 5-monophosphate (from uridine 5-triphosphate), a reaction catalyzed by the N-terminal domain. This Lactococcus lactis subsp. cremoris (strain SK11) protein is Bifunctional protein GlmU.